The sequence spans 104 residues: Large ribosomal subunit protein uL24 (104 aa).

Belongs to the universal ribosomal protein uL24 family. As to quaternary structure, part of the 50S ribosomal subunit.

Its function is as follows. One of two assembly initiator proteins, it binds directly to the 5'-end of the 23S rRNA, where it nucleates assembly of the 50S subunit. In terms of biological role, one of the proteins that surrounds the polypeptide exit tunnel on the outside of the subunit. The protein is Large ribosomal subunit protein uL24 of Shewanella woodyi (strain ATCC 51908 / MS32).